A 176-amino-acid chain; its full sequence is Probable inosine/xanthosine triphosphatase (176 aa).

Asp36 contributes to the Mg(2+) binding site.

Belongs to the YjjX NTPase family. Homodimer. It depends on Mg(2+) as a cofactor. The cofactor is Mn(2+).

The enzyme catalyses XTP + H2O = XDP + phosphate + H(+). It catalyses the reaction ITP + H2O = IDP + phosphate + H(+). Phosphatase that hydrolyzes non-canonical purine nucleotides such as XTP and ITP to their respective diphosphate derivatives. Probably excludes non-canonical purines from DNA/RNA precursor pool, thus preventing their incorporation into DNA/RNA and avoiding chromosomal lesions. This Saccharolobus islandicus (strain M.16.4 / Kamchatka #3) (Sulfolobus islandicus) protein is Probable inosine/xanthosine triphosphatase.